We begin with the raw amino-acid sequence, 268 residues long: MICOS complex subunit MIC27 (268 aa).

The N-terminal 27 residues, 1 to 27 (MAAIRMGKLTTMPAGLIYASVSVHAAK), are a transit peptide targeting the mitochondrion. Residues 28 to 110 (QEESKKQLVK…YVYLKNPPRD (83 aa)) are Mitochondrial intermembrane-facing. A helical transmembrane segment spans residues 111-129 (FLPKMGVITVSGLAGLVSA). The Mitochondrial matrix portion of the chain corresponds to 130-137 (RKGSKFKK). A helical membrane pass occupies residues 138 to 155 (ITYPLGLATLGATVCYPV). The Mitochondrial intermembrane segment spans residues 156 to 268 (QSVIIAKVTA…EDIDMYSTRS (113 aa)). Over residues 187–200 (SKEESLPKPKEKTK) the composition is skewed to basic and acidic residues. The disordered stretch occupies residues 187-268 (SKEESLPKPK…EDIDMYSTRS (82 aa)). At S204 the chain carries Phosphoserine. The segment covering 249–260 (KLMDHGQSHPED) has biased composition (basic and acidic residues).

Belongs to the apolipoprotein O/MICOS complex subunit Mic27 family. As to quaternary structure, component of the mitochondrial contact site and cristae organizing system (MICOS) complex, composed of at least MICOS10/MIC10, CHCHD3/MIC19, CHCHD6/MIC25, APOOL/MIC27, IMMT/MIC60, APOO/MIC23/MIC26 and MICOS13/MIC13. This complex was also known under the names MINOS or MitOS complex. The MICOS complex associates with mitochondrial outer membrane proteins SAMM50, MTX1 and MTX2 (together described as components of the mitochondrial outer membrane sorting assembly machinery (SAM) complex) and DNAJC11, mitochondrial inner membrane protein TMEM11 and with HSPA9. The MICOS and SAM complexes together with DNAJC11 are part of a large protein complex spanning both membranes termed the mitochondrial intermembrane space bridging (MIB) complex. Interacts with MICOS10/MIC10, IMMT/MIC60 and APOO/MIC23/MIC26.

The protein resides in the mitochondrion inner membrane. Its subcellular location is the mitochondrion. Component of the MICOS complex, a large protein complex of the mitochondrial inner membrane that plays crucial roles in the maintenance of crista junctions, inner membrane architecture, and formation of contact sites to the outer membrane. Specifically binds to cardiolipin (in vitro) but not to the precursor lipid phosphatidylglycerol. Plays a crucial role in crista junction formation and mitochondrial function,. This chain is MICOS complex subunit MIC27 (APOOL), found in Homo sapiens (Human).